Reading from the N-terminus, the 82-residue chain is Consomatin Mao1 (82 aa).

Positions 1 to 22 (MQTASWVMVMMMVWITAPLSEG) are cleaved as a signal peptide. A propeptide spanning residues 23 to 57 (GKLNDVIRGLVPDDVTPQLILRSLFFHRPSDSVVR) is cleaved from the precursor. An intrachain disulfide couples cysteine 65 to cysteine 70. Residue tryptophan 67 is modified to D-tryptophan. Residues proline 71, proline 72, and proline 74 each carry the 4-hydroxyproline modification. Positions 75–82 (WRRPNGKG) are excised as a propeptide.

This sequence belongs to the conotoxin C superfamily. Consomatin family. In terms of tissue distribution, expressed by the venom duct.

It localises to the secreted. Functionally, moderately activates human somatostatin receptors (SSTR) with a preferential activation of SSTR1 and SSTR4. In vivo, does not cause behavioral changes in mice within a few minutes of intracranial injection, but causes a progressive loss of movement thereafter. Four to five hours after injection, mice recover, even with the highest dose tested. Shows antinociception and antihyperalgesia activities in two mouse models of acute pain, most probably by acting outside the central nervous system. In Conus maioensis (Sea snail), this protein is Consomatin Mao1.